The sequence spans 443 residues: Differentially expressed in FDCP 8 homolog B (443 aa).

A disordered region spans residues 14–49; that stretch reads HLNPFDKKGGAERHPADSETQPCKDSSTSSPLSVPE. A compositionally biased stretch (basic and acidic residues) spans 17–30; that stretch reads PFDKKGGAERHPAD. The span at 31 to 45 shows a compositional bias: polar residues; it reads SETQPCKDSSTSSPL. 2 Phorbol-ester/DAG-type zinc fingers span residues 134 to 185 and 364 to 424; these read EHRF…TKPC and IHTT…STSC.

The protein belongs to the DEF8 family.

In terms of biological role, positively regulates lysosome peripheral distribution and ruffled border formation in osteoclasts. Involved in bone resorption. The sequence is that of Differentially expressed in FDCP 8 homolog B (def8-b) from Xenopus laevis (African clawed frog).